The primary structure comprises 488 residues: Protein kinase C and casein kinase substrate in neurons 2 protein (488 aa).

One can recognise an F-BAR domain in the interval 11-282; the sequence is VEVSSDSFWE…SIKAADAVED (272 aa). The stretch at 25–274 forms a coiled coil; sequence KRTVKRIDDG…GIYRELEQSI (250 aa). An N6-acetyllysine modification is found at Lys53. A compositionally biased stretch (basic and acidic residues) spans 163–176; sequence CKEEKLAVSREANS. A disordered region spans residues 163-183; sequence CKEEKLAVSREANSKADPSLN. Position 273 is a phosphoserine (Ser273). A Phosphoserine; by PKC modification is found at Ser315. The interval 316–429 is disordered; it reads RREKKKAADG…PFDEDTTSGT (114 aa). Residues 329-364 are compositionally biased toward polar residues; it reads TGINQTGDQSGQNKPSSNLSVPSNPAQSTQLQSSYN. The NPF1 motif lies at 364 to 366; that stretch reads NPF. Phosphoserine; by IKKB is present on Ser375. Residues 386 to 396 are compositionally biased toward polar residues; it reads NVSSYEKTQNY. A Phosphoserine modification is found at Ser401. Residues 406–418 are compositionally biased toward polar residues; the sequence is NNPFSSTDANGDS. The NPF2 motif lies at 407–409; it reads NPF. The short motif at 419–421 is the NPF3 element; the sequence is NPF. The 61-residue stretch at 428–488 folds into the SH3 domain; the sequence is GTEVRVRALY…YPANYVEAIQ (61 aa). At Ser448 the chain carries Phosphoserine.

The protein belongs to the PACSIN family. As to quaternary structure, homodimer. May form heterooligomers with other PACSINs. Interacts (via NPF motifs) with EHD1 (via EH domain). Interacts with EHD3. Interacts (via the SH3 domain) with MICALL1. Interacts with RAC1. Interacts (via SH3 domain) with DNM1, SYN1, SYNJ1 and WASL. Interacts with CAV1. Interacts with TRPV4. Forms a complex with EHD4 and MICALL1; the complex controls CDH5 trafficking and coordinates angiogenesis. In terms of processing, phosphorylated by casein kinase 2 (CK2) and protein kinase C (PKC). Phosphorylation by PKC probably decreases the membrane binding and tubulation capacities of PACSIN2, thereby modulating the lifetime of caveolae. Widely expressed (at protein level). Isoforms 1/3 are predominantly expressed in heart and in PC-12 cells, a pheochromocytoma cell line (at protein level). Isoforms 2/4 are widely expressed with highest levels in muscle, testis and brain (at protein level).

It localises to the cytoplasm. Its subcellular location is the cytoskeleton. It is found in the cytoplasmic vesicle membrane. The protein resides in the cell projection. The protein localises to the ruffle membrane. It localises to the early endosome. Its subcellular location is the recycling endosome membrane. It is found in the cell membrane. The protein resides in the membrane. The protein localises to the caveola. It localises to the cell junction. Its subcellular location is the adherens junction. In terms of biological role, regulates the morphogenesis and endocytosis of caveolae. Lipid-binding protein that is able to promote the tubulation of the phosphatidic acid-containing membranes it preferentially binds. Plays a role in intracellular vesicle-mediated transport. Involved in the endocytosis of cell-surface receptors like the EGF receptor, contributing to its internalization in the absence of EGF stimulus. Facilitates endothelial front-rear polarity during migration by recruiting EHD4 and MICALL1 to asymmetric adherens junctions between leader and follower cells. This Rattus norvegicus (Rat) protein is Protein kinase C and casein kinase substrate in neurons 2 protein (Pacsin2).